The primary structure comprises 70 residues: Large ribosomal subunit protein eL38 (70 aa).

The protein belongs to the eukaryotic ribosomal protein eL38 family.

The polypeptide is Large ribosomal subunit protein eL38 (RpL38) (Drosophila melanogaster (Fruit fly)).